Reading from the N-terminus, the 1087-residue chain is Exportin-7 (1087 aa).

Residues 30–96 form the Importin N-terminal domain; sequence AEKALVEFTN…RNYVLNYLAT (67 aa).

This sequence belongs to the exportin family.

Its subcellular location is the cytoplasm. The protein localises to the nucleus. Mediates the nuclear export of proteins (cargos) with broad substrate specificity. This chain is Exportin-7 (XPO7), found in Gallus gallus (Chicken).